The sequence spans 538 residues: Translation initiation factor IF-3, chloroplastic (538 aa).

Residues 1-140 (MVRSSCLQCD…VTQRKEIAVF (140 aa)) constitute a chloroplast transit peptide. Residues 141–290 (SASGQAAEPE…EEVEEEQEVL (150 aa)) are head. Disordered regions lie at residues 146–165 (AAEP…PAAK) and 188–210 (RTDS…NWPS). The interval 291 to 474 (SWADRRRALA…LILNLAPAGE (184 aa)) is IF-3 like. A disordered region spans residues 484–538 (AERDRKAAAEEEGEGDDLDFVDENEDEDVEGEGEEEEAEELEEETAEGTEVPTRS). A compositionally biased stretch (acidic residues) spans 493-530 (EEEGEGDDLDFVDENEDEDVEGEGEEEEAEELEEETAE).

It belongs to the IF-3 family. Monomer. The N-terminus is blocked.

It localises to the plastid. It is found in the chloroplast. Its function is as follows. Involved in chloroplast protein synthesis. It enhances the poly(A,U,G)-dependent binding of the initiator tRNA to chloroplast 30S subunits. The sequence is that of Translation initiation factor IF-3, chloroplastic from Euglena gracilis.